We begin with the raw amino-acid sequence, 371 residues long: Anhydro-N-acetylmuramic acid kinase (371 aa).

Position 12–20 (glycine 12–aspartate 20) interacts with ATP.

The protein belongs to the anhydro-N-acetylmuramic acid kinase family.

It catalyses the reaction 1,6-anhydro-N-acetyl-beta-muramate + ATP + H2O = N-acetyl-D-muramate 6-phosphate + ADP + H(+). It participates in amino-sugar metabolism; 1,6-anhydro-N-acetylmuramate degradation. The protein operates within cell wall biogenesis; peptidoglycan recycling. In terms of biological role, catalyzes the specific phosphorylation of 1,6-anhydro-N-acetylmuramic acid (anhMurNAc) with the simultaneous cleavage of the 1,6-anhydro ring, generating MurNAc-6-P. Is required for the utilization of anhMurNAc either imported from the medium or derived from its own cell wall murein, and thus plays a role in cell wall recycling. The sequence is that of Anhydro-N-acetylmuramic acid kinase from Mesorhizobium japonicum (strain LMG 29417 / CECT 9101 / MAFF 303099) (Mesorhizobium loti (strain MAFF 303099)).